The following is a 93-amino-acid chain: Acylphosphatase (93 aa).

The Acylphosphatase-like domain maps to 6–93 (RAHVFISGRV…GEERGFSIIW (88 aa)). Residues arginine 21 and asparagine 39 contribute to the active site.

It belongs to the acylphosphatase family.

The catalysed reaction is an acyl phosphate + H2O = a carboxylate + phosphate + H(+). This Roseiflexus sp. (strain RS-1) protein is Acylphosphatase (acyP).